The following is a 122-amino-acid chain: Large ribosomal subunit protein uL18 (122 aa).

It belongs to the universal ribosomal protein uL18 family. Part of the 50S ribosomal subunit; part of the 5S rRNA/L5/L18/L25 subcomplex. Contacts the 5S and 23S rRNAs.

This is one of the proteins that bind and probably mediate the attachment of the 5S RNA into the large ribosomal subunit, where it forms part of the central protuberance. This Geobacter sp. (strain M21) protein is Large ribosomal subunit protein uL18.